A 102-amino-acid polypeptide reads, in one-letter code: Co-chaperonin GroES (102 aa).

It belongs to the GroES chaperonin family. Heptamer of 7 subunits arranged in a ring. Interacts with the chaperonin GroEL.

The protein resides in the cytoplasm. In terms of biological role, together with the chaperonin GroEL, plays an essential role in assisting protein folding. The GroEL-GroES system forms a nano-cage that allows encapsulation of the non-native substrate proteins and provides a physical environment optimized to promote and accelerate protein folding. GroES binds to the apical surface of the GroEL ring, thereby capping the opening of the GroEL channel. This is Co-chaperonin GroES from Chlamydia caviae (strain ATCC VR-813 / DSM 19441 / 03DC25 / GPIC) (Chlamydophila caviae).